The sequence spans 637 residues: MEYLAGNYDVIVVGAGHAGCEAALAAARMGGRTLLITLSLDNIAHMDCNPSLGGPAKGHLVREIDALGGQMGITADETSLQVRMLNTGKGPAVHALRIQSDKQAYHLHMRNAILGQENLVLHQALVERIKTEDGKVSGVVTRTGAFYAAPNVILTSGTYLRGRIIIGDTMYEGGPNGQQTAMNLSGALKELGLELGRFKTGTPPRIHRRSVDYTKFTVQPGDSVPWRYSFMPTQSMFWGRDVDKQIPCWLGYTTPETHQIIQDNIHRAPLYSGKIEGIGPRYCPSIEDKVVRFADRPTHQIFLEPEGWNSDELYMAGLSTSMPEEIQYDIIHSIPGLEKAELLRPGYAIEYDYVKPYQLSLSLEVRKIPGLFTAGQLNGTSGYEEAAAQGLLAGINAALRVQGKEPFIVRRSEGYLGVLIDDLVNKGVKEPYRLLTSRAEYRLILRQDNADLRLTPRGREIGLVKDERWAAFQKKKAAIAEINALWRGTTFSPLNEHLAEVLAGVHSAPVHGGISGEELMRRPEITINEIKQLIPQLAEYDEEALLEAGIEIKYAGYIEKQLAEIERFAKMEERMIPEEIVYDQIKGLSTEGRQRLKEVAPANMGQATRITGVTPADISVLLVYLEQKRRGGQIHAT.

Gly14–Gly19 is an FAD binding site. Gly279–Phe293 contacts NAD(+).

This sequence belongs to the MnmG family. As to quaternary structure, homodimer. Heterotetramer of two MnmE and two MnmG subunits. Requires FAD as cofactor.

It is found in the cytoplasm. Its function is as follows. NAD-binding protein involved in the addition of a carboxymethylaminomethyl (cmnm) group at the wobble position (U34) of certain tRNAs, forming tRNA-cmnm(5)s(2)U34. This is tRNA uridine 5-carboxymethylaminomethyl modification enzyme MnmG from Desulfitobacterium hafniense (strain DSM 10664 / DCB-2).